A 292-amino-acid polypeptide reads, in one-letter code: 4-hydroxy-tetrahydrodipicolinate synthase (292 aa).

T45 provides a ligand contact to pyruvate. Y133 acts as the Proton donor/acceptor in catalysis. K161 (schiff-base intermediate with substrate) is an active-site residue. I203 is a binding site for pyruvate.

Belongs to the DapA family. As to quaternary structure, homotetramer; dimer of dimers.

The protein localises to the cytoplasm. It catalyses the reaction L-aspartate 4-semialdehyde + pyruvate = (2S,4S)-4-hydroxy-2,3,4,5-tetrahydrodipicolinate + H2O + H(+). It functions in the pathway amino-acid biosynthesis; L-lysine biosynthesis via DAP pathway; (S)-tetrahydrodipicolinate from L-aspartate: step 3/4. In terms of biological role, catalyzes the condensation of (S)-aspartate-beta-semialdehyde [(S)-ASA] and pyruvate to 4-hydroxy-tetrahydrodipicolinate (HTPA). This chain is 4-hydroxy-tetrahydrodipicolinate synthase, found in Nitrosomonas eutropha (strain DSM 101675 / C91 / Nm57).